Here is a 461-residue protein sequence, read N- to C-terminus: Fumarate hydratase class II (461 aa).

Residues serine 97–threonine 99, histidine 127–aspartate 130, serine 137–asparagine 139, and threonine 185 each bind substrate. The active-site Proton donor/acceptor is the histidine 186. Residue serine 316 is part of the active site. Substrate is bound by residues serine 317 and lysine 322–asparagine 324.

The protein belongs to the class-II fumarase/aspartase family. Fumarase subfamily. Homotetramer.

The protein localises to the cytoplasm. It catalyses the reaction (S)-malate = fumarate + H2O. It participates in carbohydrate metabolism; tricarboxylic acid cycle; (S)-malate from fumarate: step 1/1. In terms of biological role, involved in the TCA cycle. Catalyzes the stereospecific interconversion of fumarate to L-malate. The chain is Fumarate hydratase class II from Oceanobacillus iheyensis (strain DSM 14371 / CIP 107618 / JCM 11309 / KCTC 3954 / HTE831).